A 207-amino-acid polypeptide reads, in one-letter code: Interferon kappa (207 aa).

The first 27 residues, 1-27 (MSTKPDMIQKCLWLEILMGIFIAGTLS), serve as a signal peptide directing secretion. 2 disulfides stabilise this stretch: Cys30–Cys128 and Cys59–Cys181. Positions 118-148 (LDQQAEYLNQCLEEDKNENEDMKEMKENEMK) form a coiled coil.

It belongs to the alpha/beta interferon family. In terms of tissue distribution, expressed in keratinocytes, monocytes and in resting dendritic cells.

It is found in the secreted. In terms of biological role, may play a role in the regulation of immune cell function. Cytokine that imparts cellular protection against viral infection in a species-specific manner. Activates the interferon-stimulated response element signaling pathway. It is able to directly modulate cytokine release from monocytes and dendritic cells. Binds heparin. This Homo sapiens (Human) protein is Interferon kappa (IFNK).